The sequence spans 715 residues: Polyribonucleotide nucleotidyltransferase (715 aa).

Residues D493 and D499 each contribute to the Mg(2+) site. One can recognise a KH domain in the interval 560–619; sequence PRMITVKINPEKIRDVIGKGGSVIRALTEETGTTIDISDDGVVTIASTSSEGMAEAKKRI. In terms of domain architecture, S1 motif spans 629–697; that stretch reads GQVYEGTVLK…EKGRVRLSAK (69 aa).

The protein belongs to the polyribonucleotide nucleotidyltransferase family. The cofactor is Mg(2+).

It is found in the cytoplasm. The catalysed reaction is RNA(n+1) + phosphate = RNA(n) + a ribonucleoside 5'-diphosphate. In terms of biological role, involved in mRNA degradation. Catalyzes the phosphorolysis of single-stranded polyribonucleotides processively in the 3'- to 5'-direction. The chain is Polyribonucleotide nucleotidyltransferase from Burkholderia cenocepacia (strain HI2424).